An 80-amino-acid chain; its full sequence is Protein FAM229B (80 aa).

The disordered stretch occupies residues 1–44 (MPFRFGTQPRRFPVEGGDSSIGLEPGLSSSAACNGKEMSPTRQL).

It belongs to the FAM229 family.

The chain is Protein FAM229B (FAM229B) from Macaca fascicularis (Crab-eating macaque).